Here is a 225-residue protein sequence, read N- to C-terminus: 7-carboxy-7-deazaguanine synthase (225 aa).

Residues 14-16 and Arg-29 contribute to the substrate site; that span reads LQG. In terms of domain architecture, Radical SAM core spans 20–225; that stretch reads HFGKSAFFIR…LQTHKWLGVL (206 aa). Residues Cys-33, Cys-37, and Cys-40 each coordinate [4Fe-4S] cluster. Thr-42 contacts Mg(2+). Thr-77 provides a ligand contact to substrate. S-adenosyl-L-methionine-binding positions include Gly-79 and 127–129; that span reads SPK.

This sequence belongs to the radical SAM superfamily. 7-carboxy-7-deazaguanine synthase family. In terms of assembly, homodimer. [4Fe-4S] cluster serves as cofactor. S-adenosyl-L-methionine is required as a cofactor. The cofactor is Mg(2+).

It carries out the reaction 6-carboxy-5,6,7,8-tetrahydropterin + H(+) = 7-carboxy-7-deazaguanine + NH4(+). It functions in the pathway purine metabolism; 7-cyano-7-deazaguanine biosynthesis. In terms of biological role, catalyzes the complex heterocyclic radical-mediated conversion of 6-carboxy-5,6,7,8-tetrahydropterin (CPH4) to 7-carboxy-7-deazaguanine (CDG), a step common to the biosynthetic pathways of all 7-deazapurine-containing compounds. The sequence is that of 7-carboxy-7-deazaguanine synthase from Prochlorococcus marinus (strain SARG / CCMP1375 / SS120).